A 674-amino-acid polypeptide reads, in one-letter code: MESSASSPPLTQSDPLEAFPRRTLEAGDIAVLVLYFLFVLAVGLWSTVKTKRDTVKGYFLAGGNMLWWPVGASLFASNVGSGHFVGLAGSGAAAGLSVTAYELNGLFFVLMLSWIFLPIYITGQVTTMPEYLRKRFGGNRIPIILAVLYLFIYIFTKISVDMYAGAIFIQQSLHVNLYLAIVGLLAVTALYTIAGGLAAVIYTDALQTLIMLIGALILMGYSFAAVGGLEGLEEKYFLAMASNRSGNSSCGLPREDAFHIFRDPVTSDLPWPGILFGMSIPSLWYWCTDQVIVQRTLAAKNLSHAKGGSLMAAYLKVLPLFIMVFPGMVSRVLFPDEVACADPEICRKVCSNPAGCSDIAYPKLVLELLPTGLRGLMMAVMVAALTSSLTSIFNSASTIFTMDLWNHLRPRASEKELMIVGRVFVLLLVLVSILWIPVVQASQGGQLFIYIQSISSYLQPPVAVVFIMGCFWKRANEKGAFFGLVLGLLLGLVRLILDFIYVQPRCDQLDERPAVVKDVHYLYFSMILSSVTLITVCAVSWFTEPPSKEMVSRLTWFTRHDPVVQKEQVPSATPPPLTLSQNGTPEASGTNTQFEMVQENLSKTHSCDMTTKRSKVVKAILWLCGVENKGKEQAPSRADPIIVSLEENPLVKTLLDLNLIICISCAIFLWGYFA.

Residues 1–25 (MESSASSPPLTQSDPLEAFPRRTLE) lie on the Extracellular side of the membrane. A helical transmembrane segment spans residues 26-46 (AGDIAVLVLYFLFVLAVGLWS). Over 47–56 (TVKTKRDTVK) the chain is Cytoplasmic. The helical transmembrane segment at 57 to 77 (GYFLAGGNMLWWPVGASLFAS) threads the bilayer. Over 78–102 (NVGSGHFVGLAGSGAAAGLSVTAYE) the chain is Extracellular. A helical transmembrane segment spans residues 103–123 (LNGLFFVLMLSWIFLPIYITG). The Cytoplasmic portion of the chain corresponds to 124-140 (QVTTMPEYLRKRFGGNR). A helical transmembrane segment spans residues 141–161 (IPIILAVLYLFIYIFTKISVD). Topologically, residues 162–180 (MYAGAIFIQQSLHVNLYLA) are extracellular. The helical transmembrane segment at 181–201 (IVGLLAVTALYTIAGGLAAVI) threads the bilayer. The Cytoplasmic portion of the chain corresponds to 202-208 (YTDALQT). The chain crosses the membrane as a helical span at residues 209 to 229 (LIMLIGALILMGYSFAAVGGL). At 230–272 (EGLEEKYFLAMASNRSGNSSCGLPREDAFHIFRDPVTSDLPWP) the chain is on the extracellular side. Residues 273-293 (GILFGMSIPSLWYWCTDQVIV) form a helical membrane-spanning segment. Residues 294–308 (QRTLAAKNLSHAKGG) are Cytoplasmic-facing. Residues 309–329 (SLMAAYLKVLPLFIMVFPGMV) form a helical membrane-spanning segment. Topologically, residues 330-374 (SRVLFPDEVACADPEICRKVCSNPAGCSDIAYPKLVLELLPTGLR) are extracellular. Residues 375-397 (GLMMAVMVAALTSSLTSIFNSAS) traverse the membrane as a helical segment. Residues 398 to 418 (TIFTMDLWNHLRPRASEKELM) are Cytoplasmic-facing. A helical transmembrane segment spans residues 419–439 (IVGRVFVLLLVLVSILWIPVV). Over 440–446 (QASQGGQ) the chain is Extracellular. A helical membrane pass occupies residues 447–467 (LFIYIQSISSYLQPPVAVVFI). Residues 468-479 (MGCFWKRANEKG) lie on the Cytoplasmic side of the membrane. The helical transmembrane segment at 480–500 (AFFGLVLGLLLGLVRLILDFI) threads the bilayer. Topologically, residues 501–521 (YVQPRCDQLDERPAVVKDVHY) are extracellular. Residues 522–542 (LYFSMILSSVTLITVCAVSWF) traverse the membrane as a helical segment. Residues 543-653 (TEPPSKEMVS…SLEENPLVKT (111 aa)) lie on the Cytoplasmic side of the membrane. The tract at residues 567-589 (EQVPSATPPPLTLSQNGTPEASG) is disordered. Residues 578 to 589 (TLSQNGTPEASG) are compositionally biased toward polar residues. The helical transmembrane segment at 654-674 (LLDLNLIICISCAIFLWGYFA) threads the bilayer.

It belongs to the sodium:solute symporter (SSF) (TC 2.A.21) family.

The protein resides in the membrane. It localises to the apical cell membrane. It catalyses the reaction myo-inositol(out) + 2 Na(+)(out) = myo-inositol(in) + 2 Na(+)(in). It carries out the reaction 1D-chiro-inositol(out) + 2 Na(+)(out) = 1D-chiro-inositol(in) + 2 Na(+)(in). The enzyme catalyses D-glucose(out) + 2 Na(+)(out) = D-glucose(in) + 2 Na(+)(in). The catalysed reaction is D-xylose(out) + 2 Na(+)(out) = D-xylose(in) + 2 Na(+)(in). MI transport activity inhibited by D-chiro-inositol (DCI), phlorizin (Pz) and sodium (Na(+)). Insulin increases D-chiro-inositol uptake. Its function is as follows. Involved in the sodium-dependent cotransport of myo-inositol (MI) with a Na(+):MI stoichiometry of 2:1. Exclusively responsible for apical MI transport and absorption in intestine. Can also transport D-chiro-inositol (DCI) but not L-fucose. Exhibits stereospecific cotransport of both D-glucose and D-xylose. May induce apoptosis through the TNF-alpha, PDCD1 pathway. May play a role in the regulation of MI concentration in serum, involving reabsorption in at least the proximal tubule of the kidney. This Bos taurus (Bovine) protein is Sodium/myo-inositol cotransporter 2.